The sequence spans 423 residues: Cytidylate cyclase (423 aa).

Residues 79 to 184 (CSLFVDISGS…LKIRIGIDFG (106 aa)) enclose the Guanylate cyclase domain. F82 contributes to the a ribonucleoside 5'-triphosphate binding site. Mn(2+) contacts are provided by D84, I85, and D128. The tract at residues 290 to 409 (ENEQFYSPRD…ICHDSFGLFI (120 aa)) is AGS-C domain.

This sequence belongs to the adenylyl cyclase class-4/guanylyl cyclase family. Pyrimidine cyclase subfamily. Homodimer. Mn(2+) is required as a cofactor.

The protein resides in the cytoplasm. It catalyses the reaction CTP = 3',5'-cyclic CMP + diphosphate. Pycsar (pyrimidine cyclase system for antiphage resistance) provides immunity against bacteriophage. The pyrimidine cyclase (PycC) synthesizes cyclic nucleotides in response to infection; these serve as specific second messenger signals. The signal activates the adjacent effector, leading to bacterial cell death and abortive phage infection. A clade E Pycsar system. Functionally, the pyrimidine cyclase gene of a two-gene Pycsar system, weakly generates cyclic CMP (cCMP) from CTP, has little to no activity on ATP, GTP or UTP. Expression of this and adjacent effector SaPycTM (AC P0DV39) probably confers resistance to bacteriophage. The genes are probably only expressed in response to bacteriophage infection. The protein is Cytidylate cyclase of Staphylococcus aureus.